The following is a 409-amino-acid chain: Probable sodium/metabolite cotransporter BASS6, chloroplastic (409 aa).

A chloroplast-targeting transit peptide spans 1–49; it reads MSVITTPIETLHLKSTLRLLPRAVYRSQRIQVFPPNIFSNTSLSSPLRI. 9 helical membrane-spanning segments follow: residues 100–120, 121–141, 170–190, 191–211, 221–241, 253–273, 285–305, 316–336, and 381–401; these read ILPH…PSFT, WFTS…VGIN, VLGF…TPIG, AGIM…ATFL, IVMT…LSLL, GMIS…LLLN, PFLP…PLAL, ATIL…GYFL, and IPPA…VLIW.

It belongs to the bile acid:sodium symporter (BASS) (TC 2.A.28) family.

Its subcellular location is the membrane. The protein localises to the plastid. It localises to the chloroplast envelope. In terms of biological role, may function as sodium-coupled metabolite transporter across the chloroplast envelope. The polypeptide is Probable sodium/metabolite cotransporter BASS6, chloroplastic (BASS6) (Arabidopsis thaliana (Mouse-ear cress)).